We begin with the raw amino-acid sequence, 814 residues long: ATP-dependent 6-phosphofructokinase 1 (814 aa).

The interval 1–420 (MDADASTITP…NLETYKLLTK (420 aa)) is N-terminal catalytic PFK domain 1. Residues glycine 55, 118–119 (RS), and 148–151 (GDGS) contribute to the ATP site. Residue aspartate 149 coordinates Mg(2+). Substrate-binding positions include 194-196 (SID), arginine 231, 238-240 (MGR), glutamate 294, arginine 322, and 328-331 (HVQR). Aspartate 196 functions as the Proton acceptor in the catalytic mechanism. The segment at 421–435 (MRTVEKDNLSEGHKF) is interdomain linker. A C-terminal regulatory PFK domain 2 region spans residues 436 to 814 (NVAVINVGAP…EEESADSHMF (379 aa)). Beta-D-fructose 2,6-bisphosphate is bound by residues lysine 505, 563 to 567 (TISNN), arginine 601, 608 to 610 (MGG), glutamate 664, arginine 690, 696 to 699 (HVQQ), and arginine 771.

The protein belongs to the phosphofructokinase type A (PFKA) family. ATP-dependent PFK group I subfamily. Eukaryotic two domain clade 'E' sub-subfamily. Homotetramer. The cofactor is Mg(2+).

Its subcellular location is the cytoplasm. It carries out the reaction beta-D-fructose 6-phosphate + ATP = beta-D-fructose 1,6-bisphosphate + ADP + H(+). Its pathway is carbohydrate degradation; glycolysis; D-glyceraldehyde 3-phosphate and glycerone phosphate from D-glucose: step 3/4. Allosterically activated by ADP, AMP, or fructose 2,6-bisphosphate, and allosterically inhibited by ATP or citrate. Its function is as follows. Catalyzes the phosphorylation of D-fructose 6-phosphate to fructose 1,6-bisphosphate by ATP, the first committing step of glycolysis. This chain is ATP-dependent 6-phosphofructokinase 1, found in Caenorhabditis elegans.